The chain runs to 240 residues: FAS1 domain-containing protein AN1527 (240 aa).

The N-terminal stretch at 1–24 (MRQLSTTALVLFLFFYCSISTAWS) is a signal peptide. An FAS1 domain is found at 91–239 (EPTISDVLPK…GEVWVIDGVI (149 aa)).

It is found in the vacuole. This Emericella nidulans (strain FGSC A4 / ATCC 38163 / CBS 112.46 / NRRL 194 / M139) (Aspergillus nidulans) protein is FAS1 domain-containing protein AN1527.